Here is a 303-residue protein sequence, read N- to C-terminus: Epimerase family protein YfhF (303 aa).

The protein belongs to the NAD(P)-dependent epimerase/dehydratase family. SDR39U1 subfamily.

The sequence is that of Epimerase family protein YfhF (yfhF) from Bacillus subtilis (strain 168).